A 165-amino-acid chain; its full sequence is MSNSRPAHARKAEIVVEIVSKIKSAQGVAIAEYKHLTVAKMTELRVQALKQNIDIKVYKDSLVRRAAEELGLVDLIPFLTQQNVFIFSNEDSISAAKLVANFAKKNEALKLKAGIYEGKVVDTVGINEVASLPSKEELYSMFASSLLYPLRKAMAAINAVAETRN.

The protein belongs to the universal ribosomal protein uL10 family. As to quaternary structure, part of the ribosomal stalk of the 50S ribosomal subunit. The N-terminus interacts with L11 and the large rRNA to form the base of the stalk. The C-terminus forms an elongated spine to which L12 dimers bind in a sequential fashion forming a multimeric L10(L12)X complex.

Functionally, forms part of the ribosomal stalk, playing a central role in the interaction of the ribosome with GTP-bound translation factors. In Mycoplasma mycoides subsp. mycoides SC (strain CCUG 32753 / NCTC 10114 / PG1), this protein is Large ribosomal subunit protein uL10.